A 256-amino-acid chain; its full sequence is Alcohol dehydrogenase (256 aa).

12–35 (FVAGLGGIGLDTSKELVKRDLKNL) provides a ligand contact to NAD(+). S140 is a substrate binding site. Y153 functions as the Proton acceptor in the catalytic mechanism.

This sequence belongs to the short-chain dehydrogenases/reductases (SDR) family. In terms of assembly, homodimer.

It carries out the reaction a primary alcohol + NAD(+) = an aldehyde + NADH + H(+). It catalyses the reaction a secondary alcohol + NAD(+) = a ketone + NADH + H(+). The chain is Alcohol dehydrogenase (Adh) from Drosophila tsacasi (Fruit fly).